A 512-amino-acid polypeptide reads, in one-letter code: Histidine ammonia-lyase (512 aa).

The segment at residues 144–146 is a cross-link (5-imidazolinone (Ala-Gly)); the sequence is ASG. Ser-145 carries the 2,3-didehydroalanine (Ser) modification.

This sequence belongs to the PAL/histidase family. Contains an active site 4-methylidene-imidazol-5-one (MIO), which is formed autocatalytically by cyclization and dehydration of residues Ala-Ser-Gly.

Its subcellular location is the cytoplasm. It catalyses the reaction L-histidine = trans-urocanate + NH4(+). It participates in amino-acid degradation; L-histidine degradation into L-glutamate; N-formimidoyl-L-glutamate from L-histidine: step 1/3. The sequence is that of Histidine ammonia-lyase from Desulfotalea psychrophila (strain LSv54 / DSM 12343).